The chain runs to 498 residues: Protein nucleotidyltransferase YdiU (498 aa).

8 residues coordinate ATP: Gly88, Gly90, Arg91, Lys111, Asp123, Gly124, Arg174, and Arg181. The active-site Proton acceptor is Asp250. Positions 251 and 260 each coordinate Mg(2+). Residue Asp260 participates in ATP binding.

Belongs to the SELO family. Mg(2+) serves as cofactor. Mn(2+) is required as a cofactor.

The catalysed reaction is L-seryl-[protein] + ATP = 3-O-(5'-adenylyl)-L-seryl-[protein] + diphosphate. The enzyme catalyses L-threonyl-[protein] + ATP = 3-O-(5'-adenylyl)-L-threonyl-[protein] + diphosphate. It carries out the reaction L-tyrosyl-[protein] + ATP = O-(5'-adenylyl)-L-tyrosyl-[protein] + diphosphate. It catalyses the reaction L-histidyl-[protein] + UTP = N(tele)-(5'-uridylyl)-L-histidyl-[protein] + diphosphate. The catalysed reaction is L-seryl-[protein] + UTP = O-(5'-uridylyl)-L-seryl-[protein] + diphosphate. The enzyme catalyses L-tyrosyl-[protein] + UTP = O-(5'-uridylyl)-L-tyrosyl-[protein] + diphosphate. Its function is as follows. Nucleotidyltransferase involved in the post-translational modification of proteins. It can catalyze the addition of adenosine monophosphate (AMP) or uridine monophosphate (UMP) to a protein, resulting in modifications known as AMPylation and UMPylation. This chain is Protein nucleotidyltransferase YdiU, found in Methylorubrum populi (strain ATCC BAA-705 / NCIMB 13946 / BJ001) (Methylobacterium populi).